The chain runs to 120 residues: Large ribosomal subunit protein uL18 (120 aa).

The protein belongs to the universal ribosomal protein uL18 family. As to quaternary structure, part of the 50S ribosomal subunit; part of the 5S rRNA/L5/L18/L25 subcomplex. Contacts the 5S and 23S rRNAs.

Functionally, this is one of the proteins that bind and probably mediate the attachment of the 5S RNA into the large ribosomal subunit, where it forms part of the central protuberance. This Allorhizobium ampelinum (strain ATCC BAA-846 / DSM 112012 / S4) (Agrobacterium vitis (strain S4)) protein is Large ribosomal subunit protein uL18.